The primary structure comprises 313 residues: Porphobilinogen deaminase (313 aa).

At Cys242 the chain carries S-(dipyrrolylmethanemethyl)cysteine.

Belongs to the HMBS family. In terms of assembly, monomer. Dipyrromethane is required as a cofactor.

The enzyme catalyses 4 porphobilinogen + H2O = hydroxymethylbilane + 4 NH4(+). Its pathway is porphyrin-containing compound metabolism; protoporphyrin-IX biosynthesis; coproporphyrinogen-III from 5-aminolevulinate: step 2/4. Its function is as follows. Tetrapolymerization of the monopyrrole PBG into the hydroxymethylbilane pre-uroporphyrinogen in several discrete steps. The chain is Porphobilinogen deaminase from Salmonella arizonae (strain ATCC BAA-731 / CDC346-86 / RSK2980).